The following is a 118-amino-acid chain: Cell division protein FtsB (118 aa).

At 1–3 the chain is on the cytoplasmic side; that stretch reads MRL. Residues 4–21 form a helical membrane-spanning segment; the sequence is LFLVLLVLLGLIQYPLWL. Topologically, residues 22–118 are periplasmic; that stretch reads GKGGWFKVWD…PRPPATPPRR (97 aa). Positions 28-62 form a coiled coil; it reads KVWDLQRQVAEQRETNDGLRARNTALEAEVRDLAT. Residues 88 to 118 are disordered; that stretch reads LPPGTPLPSGNSTPQASALSKPRPPATPPRR. Over residues 95-105 the composition is skewed to polar residues; it reads PSGNSTPQASA. Residues 109–118 are compositionally biased toward pro residues; that stretch reads PRPPATPPRR.

It belongs to the FtsB family. As to quaternary structure, part of a complex composed of FtsB, FtsL and FtsQ.

The protein localises to the cell inner membrane. In terms of biological role, essential cell division protein. May link together the upstream cell division proteins, which are predominantly cytoplasmic, with the downstream cell division proteins, which are predominantly periplasmic. In Bordetella parapertussis (strain 12822 / ATCC BAA-587 / NCTC 13253), this protein is Cell division protein FtsB.